The primary structure comprises 126 residues: Aspartate 1-decarboxylase (126 aa).

The active-site Schiff-base intermediate with substrate; via pyruvic acid is the S25. S25 carries the post-translational modification Pyruvic acid (Ser). T57 is a binding site for substrate. Y58 serves as the catalytic Proton donor. Position 72–74 (72–74 (GAT)) interacts with substrate.

This sequence belongs to the PanD family. Heterooctamer of four alpha and four beta subunits. Requires pyruvate as cofactor. In terms of processing, is synthesized initially as an inactive proenzyme, which is activated by self-cleavage at a specific serine bond to produce a beta-subunit with a hydroxyl group at its C-terminus and an alpha-subunit with a pyruvoyl group at its N-terminus.

The protein localises to the cytoplasm. The enzyme catalyses L-aspartate + H(+) = beta-alanine + CO2. It participates in cofactor biosynthesis; (R)-pantothenate biosynthesis; beta-alanine from L-aspartate: step 1/1. In terms of biological role, catalyzes the pyruvoyl-dependent decarboxylation of aspartate to produce beta-alanine. The polypeptide is Aspartate 1-decarboxylase (Campylobacter jejuni subsp. doylei (strain ATCC BAA-1458 / RM4099 / 269.97)).